The following is a 217-amino-acid chain: Somatotropin (217 aa).

A signal peptide spans 1-26 (MAAGSRTSLLLAFALLCLPWLQEGSA). His-44 serves as a coordination point for Zn(2+). Cysteines 79 and 191 form a disulfide. Residue Ser-132 is modified to Phosphoserine. Glu-200 contributes to the Zn(2+) binding site. Residues Cys-208 and Cys-215 are joined by a disulfide bond.

Belongs to the somatotropin/prolactin family.

The protein resides in the secreted. Plays an important role in growth control. Its major role in stimulating body growth is to stimulate the liver and other tissues to secrete IGF1. It stimulates both the differentiation and proliferation of myoblasts. It also stimulates amino acid uptake and protein synthesis in muscle and other tissues. This is Somatotropin (GH1) from Macaca mulatta (Rhesus macaque).